Consider the following 77-residue polypeptide: Conotoxin ArMKLT2-022 (77 aa).

The first 22 residues, 1–22 (MKLTCVLIVAVLFLTACQLIAA), serve as a signal peptide directing secretion. Positions 23 to 46 (DDSRDLKRFSRRKMRDGMLNTKNT) are excised as a propeptide. Gln-49 bears the Pyrrolidone carboxylic acid mark. 3 cysteine pairs are disulfide-bonded: Cys-50–Cys-65, Cys-57–Cys-68, and Cys-64–Cys-73.

This sequence belongs to the conotoxin O1 superfamily. In terms of tissue distribution, expressed by the venom duct.

Its subcellular location is the secreted. The polypeptide is Conotoxin ArMKLT2-022 (Conus arenatus (Sand-dusted cone)).